We begin with the raw amino-acid sequence, 344 residues long: Follistatin (344 aa).

An N-terminal signal peptide occupies residues 1 to 29 (MARPRHQPGGLCLLLLLLCQFMEDRSAQA). The 74-residue stretch at 30–103 (GNCWLRQAKN…TCENVDCGPG (74 aa)) folds into the TB domain. Intrachain disulfides connect cysteine 32/cysteine 55, cysteine 42/cysteine 88, cysteine 56/cysteine 91, cysteine 95/cysteine 106, cysteine 100/cysteine 116, cysteine 118/cysteine 150, cysteine 122/cysteine 143, cysteine 132/cysteine 164, cysteine 168/cysteine 179, cysteine 173/cysteine 189, cysteine 192/cysteine 225, cysteine 196/cysteine 218, cysteine 207/cysteine 239, cysteine 245/cysteine 256, cysteine 250/cysteine 267, cysteine 270/cysteine 302, cysteine 274/cysteine 295, and cysteine 284/cysteine 316. In terms of domain architecture, Follistatin-like 1 spans 94 to 117 (TCENVDCGPGKKCRMNKKNKPRCV). One can recognise a Kazal-like 1 domain in the interval 112 to 166 (NKPRCVCAPDCSNITWKGLVCGLDGKTYRNECALLKARCKEQPELQVQYQGKCKK). Residue asparagine 124 is glycosylated (N-linked (GlcNAc...) asparagine). The Follistatin-like 2 domain occupies 167–190 (TCRDVFCPGSSTCVVDQTNNAYCV). The region spanning 186-241 (NAYCVTCNRICPEPTSSEQYLCGNDGVTYPSACHLRKATCLLGRSIGLAYEGKCIK) is the Kazal-like 2 domain. Residues 244 to 268 (SCDDIQCTGGKKCLWDFKVGRGRCS) form the Follistatin-like 3 domain. The Kazal-like 3 domain occupies 261–318 (KVGRGRCSLCGELCPESKSEEPVCASDNATYASECAMKEAACSSGVLLEVKHSGSCNS). Asparagine 288 carries an N-linked (GlcNAc...) asparagine glycan. The disordered stretch occupies residues 316 to 344 (CNSISEDTEDEEEDEDQDYSFPISSILEW). Over residues 321–333 (EDTEDEEEDEDQD) the composition is skewed to acidic residues.

In terms of assembly, monomer.

It is found in the secreted. In terms of biological role, binds directly to activin and functions as an activin antagonist. Specific inhibitor of the biosynthesis and secretion of pituitary follicle stimulating hormone (FSH). This Bubalus bubalis (Domestic water buffalo) protein is Follistatin.